Consider the following 394-residue polypeptide: Acetate kinase (394 aa).

Asn-10 lines the Mg(2+) pocket. ATP is bound at residue Lys-17. Position 87 (Arg-87) interacts with substrate. The active-site Proton donor/acceptor is Asp-144. Residues 204–208, 279–281, and 327–331 each bind ATP; these read HLGNG, DMR, and GIGEN. Glu-381 contributes to the Mg(2+) binding site.

Belongs to the acetokinase family. Homodimer. The cofactor is Mg(2+). Requires Mn(2+) as cofactor.

The protein resides in the cytoplasm. It catalyses the reaction acetate + ATP = acetyl phosphate + ADP. The protein operates within metabolic intermediate biosynthesis; acetyl-CoA biosynthesis; acetyl-CoA from acetate: step 1/2. Functionally, catalyzes the formation of acetyl phosphate from acetate and ATP. Can also catalyze the reverse reaction. The polypeptide is Acetate kinase (Pseudomonas aeruginosa (strain LESB58)).